Reading from the N-terminus, the 1464-residue chain is MSKKQYKISHFMTTKISLRISSPEEILKDSYGEIIKPETINYRTNKPERNGLFCEKIFGPIKDYECFCGKYKKKLYKEIIRLRQLNKELKVKGLFCNRCGVEITKNTVRRTRMGHINLVVPIVHIWGFRSTPNKIGSILGLSSQQLDMIIYYERYVVIQPGIANSYNNLSIKKLDLLTEEEYTYILNKIPIGNKYLYDNDPNKFIAKMGAECLEELLIRVDLEVLLSDLKKEIKNEESKQRKIELFKRLNVVECFIEGKKKGNKIESIILKVLPVIPPELRPLVPLDGGGYASSDLNDFYRRILIRNNRLKRLIHISAPEIILRNEKRMLQEAVDSLLDNSKKILAVKSESNRPLKSLSDSLKGKQGRFRQNLLGKRVDYSARSVIVVGPKLKLHECGLPKEIAAEIYKPFLIRKLLERKIVRTVKSAKKLISKKDPIIWDILKYLLKGHPVLLNRAPTLHRLGIQSFQPKLIEGKAILLHPLVCSAFNADFDGDQMAVHLPLSNEAILEAKLLMLASQNILNPANGYPITVPSQDMVLGLYYMTKELKSTYESKIKGEGMCFSSLEEVEIAYNNKVVEIHAIIKVKVKILENIGLISKIIKTTVGRVLFNIVVPPKVGYINKLLTNKSLRKIINYILYNTNIPTTAKFLDKIKDLGYYHAFKGGLSFNLNDISIPKEKKSLVKRAIEKVSLVKDNYNLGLITNNERYNQIIDIWTNTNVSLTEKVINYMRKSKQGFNSVYMMLDSGARSSKEQIRQLSGMRGLMAKPQKTSSLGSEIIENPILSNFLEGLSILEYFISTHGARKGLADTALKTADAGYLTRRLVDSAQDVIIQEDDCKTLLGIKISAVKKKEKIIETLSSRVLGRIALNNIYDPTNNNVLIKSSQMIDEKNINLIEKASIDTIEVRSPLTCKSKTGICRKCYGRNLANGLMIQKGEAIGVIAAQSIGEPGTQLTLRTFHVGGTAGNIYEYSKIKAKYDGIIEYEDIQVVKNLVISRSSEIRLLNNHKDKVILMKKKIPYGAKLYVSNKQLVKKNDIICSWDPYNAVIIAEFTGKIRYSNIERDEQTGFKVISERKTPTLKIVNKKNEILKSYNIPVGAHLVVNDGDIINEGSILIKIPIKDLKSGDITGGLPRLSELFEARNDDDDDDYYDSDYYDYYDYSDDDDDYDDYDDYYYNYDDDENDNDNDYDYDYDYDYDYDSDSHNSYSHNSYSPSSNDNYDYDYDSDSDYDSDYDYGDISLNEILDIKGLRAAQKKLINEIQEVYRSQGVKINDKHFEVIVRQMTQKVEIIKSGDTSFLEGNIEYTDVFLEENKRILNMKFIEESGDSKKFFKGQLVNFHELKKENYLLKLSNKNKILFRDVITAISKPIIQGITKAALQTKSFLSAASFQETTKVLYEAAISNKTDYLNGLKENVILGNKIPAGTGLKKSSYEEIIIGDGNQKLKKKDSEINKKLKIENKILK.

Cysteine 66, cysteine 68, cysteine 96, and cysteine 99 together coordinate Zn(2+). 3 residues coordinate Mg(2+): aspartate 491, aspartate 493, and aspartate 495. Cysteine 838, cysteine 912, cysteine 919, and cysteine 922 together coordinate Zn(2+). Residues 1143–1200 (NDDDDDDYYDSDYYDYYDYSDDDDDYDDYDDYYYNYDDDENDNDNDYDYDYDYDYDYD) are compositionally biased toward acidic residues. The tract at residues 1143-1229 (NDDDDDDYYD…YDYDYDSDSD (87 aa)) is disordered. The segment covering 1204 to 1219 (HNSYSHNSYSPSSNDN) has biased composition (low complexity). Residues 1220-1229 (YDYDYDSDSD) show a composition bias toward acidic residues.

Belongs to the RNA polymerase beta' chain family. As to quaternary structure, the RNAP catalytic core consists of 2 alpha, 1 beta, 1 beta' and 1 omega subunit. When a sigma factor is associated with the core the holoenzyme is formed, which can initiate transcription. It depends on Mg(2+) as a cofactor. Zn(2+) is required as a cofactor.

It catalyses the reaction RNA(n) + a ribonucleoside 5'-triphosphate = RNA(n+1) + diphosphate. In terms of biological role, DNA-dependent RNA polymerase catalyzes the transcription of DNA into RNA using the four ribonucleoside triphosphates as substrates. The chain is DNA-directed RNA polymerase subunit beta' from Karelsulcia muelleri (strain GWSS) (Sulcia muelleri).